Consider the following 82-residue polypeptide: MSHTVKIYDTCIGCTQCVRACPTDVLEMVPWDGCKSGQIASSPRVEDCVGCKRCETACPTDFLSVRVYLGRLETTRSLGLAY.

4Fe-4S ferredoxin-type domains follow at residues 2–31 and 37–68; these read SHTVKIYDTCIGCTQCVRACPTDVLEMVPW and GQIASSPRVEDCVGCKRCETACPTDFLSVRVY. Positions 11, 14, 17, 21, 48, 51, 54, and 58 each coordinate [4Fe-4S] cluster.

As to quaternary structure, the eukaryotic PSI reaction center is composed of at least 11 subunits. Requires [4Fe-4S] cluster as cofactor.

It localises to the plastid. Its subcellular location is the chloroplast thylakoid membrane. The enzyme catalyses reduced [plastocyanin] + hnu + oxidized [2Fe-2S]-[ferredoxin] = oxidized [plastocyanin] + reduced [2Fe-2S]-[ferredoxin]. In terms of biological role, apoprotein for the two 4Fe-4S centers FA and FB of photosystem I (PSI); essential for photochemical activity. FB is the terminal electron acceptor of PSI, donating electrons to ferredoxin. The C-terminus interacts with PsaA/B/D and helps assemble the protein into the PSI complex. Required for binding of PsaD and PsaE to PSI. PSI is a plastocyanin/cytochrome c6-ferredoxin oxidoreductase, converting photonic excitation into a charge separation, which transfers an electron from the donor P700 chlorophyll pair to the spectroscopically characterized acceptors A0, A1, FX, FA and FB in turn. This chain is Photosystem I iron-sulfur center, found in Trieres chinensis (Marine centric diatom).